The sequence spans 1407 residues: DNA-directed RNA polymerase subunit beta' (1407 aa).

The Zn(2+) site is built by cysteine 70, cysteine 72, cysteine 85, and cysteine 88. The Mg(2+) site is built by aspartate 460, aspartate 462, and aspartate 464. Cysteine 814, cysteine 888, cysteine 895, and cysteine 898 together coordinate Zn(2+). Lysine 972 is modified (N6-acetyllysine).

It belongs to the RNA polymerase beta' chain family. The RNAP catalytic core consists of 2 alpha, 1 beta, 1 beta' and 1 omega subunit. When a sigma factor is associated with the core the holoenzyme is formed, which can initiate transcription. Mg(2+) is required as a cofactor. It depends on Zn(2+) as a cofactor.

The catalysed reaction is RNA(n) + a ribonucleoside 5'-triphosphate = RNA(n+1) + diphosphate. In terms of biological role, DNA-dependent RNA polymerase catalyzes the transcription of DNA into RNA using the four ribonucleoside triphosphates as substrates. The polypeptide is DNA-directed RNA polymerase subunit beta' (Shigella sonnei (strain Ss046)).